We begin with the raw amino-acid sequence, 163 residues long: Large ribosomal subunit protein uL15 (163 aa).

It belongs to the universal ribosomal protein uL15 family. Part of the 50S ribosomal subunit.

Functionally, binds to the 23S rRNA. This Orientia tsutsugamushi (strain Boryong) (Rickettsia tsutsugamushi) protein is Large ribosomal subunit protein uL15.